Reading from the N-terminus, the 78-residue chain is Small ribosomal subunit protein bS18B (78 aa).

Positions 1-22 (MPRKPVRKVASTPRPNPLDQNG) are disordered.

Belongs to the bacterial ribosomal protein bS18 family. In terms of assembly, part of the 30S ribosomal subunit. Forms a tight heterodimer with protein bS6.

Its function is as follows. Binds as a heterodimer with protein bS6 to the central domain of the 16S rRNA, where it helps stabilize the platform of the 30S subunit. The protein is Small ribosomal subunit protein bS18B of Streptomyces avermitilis (strain ATCC 31267 / DSM 46492 / JCM 5070 / NBRC 14893 / NCIMB 12804 / NRRL 8165 / MA-4680).